Reading from the N-terminus, the 399-residue chain is GDP-D-glucose phosphorylase 1 (399 aa).

Histidine 237 (tele-GMP-histidine intermediate) is an active-site residue.

It belongs to the GDPGP1 family.

The protein resides in the cytoplasm. It carries out the reaction GDP-alpha-D-glucose + phosphate = alpha-D-glucose 1-phosphate + GDP + H(+). Specific and highly efficient GDP-D-glucose phosphorylase regulating the levels of GDP-D-glucose in cells. The protein is GDP-D-glucose phosphorylase 1 (gdpgp1) of Xenopus laevis (African clawed frog).